Consider the following 478-residue polypeptide: BTB/POZ domain-containing protein 17 (478 aa).

The N-terminal stretch at 1 to 28 is a signal peptide; it reads MLRKGSCKPGSWGSFWAILALVGLVTRA. N-linked (GlcNAc...) asparagine glycans are attached at residues asparagine 61, asparagine 100, asparagine 195, and asparagine 307. Residues 63 to 132 form the BTB domain; it reads SDVILRVQAV…LYCGELTVLL (70 aa). In terms of domain architecture, BACK spans 169–269; the sequence is AVGWYHYAVS…IPPAQLFQLQ (101 aa).

It is found in the secreted. This Mus musculus (Mouse) protein is BTB/POZ domain-containing protein 17 (Btbd17).